The chain runs to 593 residues: Prospero homeobox protein 2 (593 aa).

6 disordered regions span residues 24–48, 79–130, 153–199, 260–284, 298–333, and 356–388; these read CMDQERSPATAEAGRDSFPSGQLPS, SPSS…GGTR, TEPR…KDLC, QERSCQGLASEGRNQPSPPGRSAYK, PQAGVPLGNSTLARPLDSPMCPVSPRGVPRSYQSPL, and GRGPDGQWSGSPPQDAAFQSHTSPESAQQPWGL. Basic and acidic residues predominate over residues 87–99; that stretch reads RARESLRCPEKGR. Low complexity predominate over residues 167–181; it reads PRSSPRARPRNSCSS. Polar residues predominate over residues 363 to 380; that stretch reads WSGSPPQDAAFQSHTSPE. Residues 433 to 491 form the Prospero-type homeo domain; the sequence is QEGLSPGHLKKAKLMFFFTRYPSSSLLKAYFPDVQFNRCITSQMIKWFSNFREFYYIQM. The interval 433 to 591 is homeo-Prospero; it reads QEGLSPGHLK…KSPSFLPGLF (159 aa). Residues 492-591 enclose the Prospero domain; the sequence is EKYARQALSD…KSPSFLPGLF (100 aa).

This sequence belongs to the Prospero homeodomain family. As to expression, expressed in testis.

The protein localises to the nucleus. In terms of biological role, transcription regulator. Does not seem to be essential for embryonic development and postnatal survival. The sequence is that of Prospero homeobox protein 2 (Prox2) from Mus musculus (Mouse).